A 405-amino-acid polypeptide reads, in one-letter code: Glycosylated lysosomal membrane protein A (405 aa).

The N-terminal stretch at Met-1 to Gly-25 is a signal peptide. The Lumenal segment spans residues Gln-26–Ser-365. N-linked (GlcNAc...) asparagine glycosylation is found at Asn-55, Asn-86, Asn-125, Asn-129, Asn-143, Asn-153, Asn-157, Asn-164, Asn-169, Asn-179, Asn-206, Asn-222, Asn-267, Asn-304, and Asn-331. A helical membrane pass occupies residues Ile-366–Gly-386. Over Thr-387–Asn-405 the chain is Cytoplasmic. The Lysosomal targeting motif motif lies at Tyr-401–Asn-405.

This sequence belongs to the GLMP family. In terms of assembly, interacts (via lumenal domain) with lysosomal protein MFSD1; the interaction starts while both proteins are still in the endoplasmic reticulum and is required for stabilization of MFSD1 in lysosomes but has no direct effect on its targeting to lysosomes or transporter activity.

The protein localises to the lysosome membrane. Functionally, required to protect lysosomal transporter MFSD1 from lysosomal proteolysis and for MFSD1 lysosomal localization. The protein is Glycosylated lysosomal membrane protein A (glmp-a) of Xenopus laevis (African clawed frog).